A 58-amino-acid polypeptide reads, in one-letter code: Basic phospholipase A2 homolog PocTX (58 aa).

Cysteines 29 and 45 form a disulfide.

Expressed by the venom gland.

It localises to the secreted. Its function is as follows. Wasp venom phospholipase A2 homolog that lacks enzymatic activity. The chain is Basic phospholipase A2 homolog PocTX from Polybia occidentalis (Paper wasp).